Consider the following 328-residue polypeptide: Carbonic anhydrase-related protein 11 (328 aa).

An N-terminal signal peptide occupies residues 1-23 (MGGAARLSAPQALVLWAALGAAA). The region spanning 33–303 (DWWSYKENLQ…LAHRALRGNR (271 aa)) is the Alpha-carbonic anhydrase domain. The N-linked (GlcNAc...) asparagine glycan is linked to Asn118. Residues 300-328 (RGNRDPRHPERRCRGPNYRLHVDGGPHGR) form a disordered region. Positions 319 to 328 (LHVDGGPHGR) are enriched in basic and acidic residues.

This sequence belongs to the alpha-carbonic anhydrase family.

It localises to the secreted. In terms of biological role, does not have a catalytic activity. The chain is Carbonic anhydrase-related protein 11 (Ca11) from Mus musculus (Mouse).